Here is a 502-residue protein sequence, read N- to C-terminus: Protein IWS1 homolog 1 (502 aa).

Basic and acidic residues predominate over residues 1–12 (MGFEDDPYRDVD). 2 disordered regions span residues 1–61 (MGFE…DNDK) and 87–208 (DEDV…DEDE). Composition is skewed to acidic residues over residues 13–22 (GEPIVDFDDF), 34–49 (QDFD…DWDG), and 87–97 (DEDVDDAEFDE). 2 stretches are compositionally biased toward basic and acidic residues: residues 138-151 (NRGE…DEMW) and 181-194 (PSER…DRSP). Phosphotyrosine is present on Tyr185. Residues 287 to 370 (TLLKNWLEPL…DKWSRPIFNK (84 aa)) form the TFIIS N-terminal domain. Residues 385-434 (VPYRRPPVKKPSNKATMESRDGDFDLEIRERKTGLTSGQSSRGDRQMTMR) are disordered. Positions 401 to 417 (MESRDGDFDLEIRERKT) are enriched in basic and acidic residues.

The protein belongs to the IWS1 family. In terms of assembly, interacts with BZR2/BES1 and SPT6 (via N-terminus). Interacts with ASHH2/SDG8.

It is found in the nucleus. In terms of biological role, transcription factor involved in RNA polymerase II (RNAPII) transcription regulation. Involved in transcription elongation. May function at post-recruitment and elongation steps of transcription. May be recruited by BZR2/BES1 to target genes and promote their expression during transcription elongation process. Required for brassinosteroid (BR)-induced gene expression. Required the for regulation of numerous nitrogen-responsive genes in roots. Acts in roots to repress NRT2.1 transcription in response to high nitrogen supply. This repression is associated with an IWS1-dependent increase of trimethylation on 'Lys-27' H3K27me3 at the NRT2.1 locus. This chain is Protein IWS1 homolog 1, found in Arabidopsis thaliana (Mouse-ear cress).